We begin with the raw amino-acid sequence, 132 residues long: Small ribosomal subunit protein uS8c (132 aa).

The protein belongs to the universal ribosomal protein uS8 family. As to quaternary structure, part of the 30S ribosomal subunit.

The protein resides in the plastid. The protein localises to the chloroplast. In terms of biological role, one of the primary rRNA binding proteins, it binds directly to 16S rRNA central domain where it helps coordinate assembly of the platform of the 30S subunit. In Nandina domestica (Heavenly bamboo), this protein is Small ribosomal subunit protein uS8c (rps8).